Consider the following 173-residue polypeptide: Adenine phosphoribosyltransferase (173 aa).

This sequence belongs to the purine/pyrimidine phosphoribosyltransferase family. As to quaternary structure, homodimer.

It is found in the cytoplasm. It carries out the reaction AMP + diphosphate = 5-phospho-alpha-D-ribose 1-diphosphate + adenine. It participates in purine metabolism; AMP biosynthesis via salvage pathway; AMP from adenine: step 1/1. Its function is as follows. Catalyzes a salvage reaction resulting in the formation of AMP, that is energically less costly than de novo synthesis. This is Adenine phosphoribosyltransferase from Thermotoga maritima (strain ATCC 43589 / DSM 3109 / JCM 10099 / NBRC 100826 / MSB8).